The chain runs to 116 residues: Ribosome-binding factor A (116 aa).

This sequence belongs to the RbfA family. As to quaternary structure, monomer. Binds 30S ribosomal subunits, but not 50S ribosomal subunits or 70S ribosomes.

The protein localises to the cytoplasm. One of several proteins that assist in the late maturation steps of the functional core of the 30S ribosomal subunit. Associates with free 30S ribosomal subunits (but not with 30S subunits that are part of 70S ribosomes or polysomes). Required for efficient processing of 16S rRNA. May interact with the 5'-terminal helix region of 16S rRNA. The polypeptide is Ribosome-binding factor A (Clostridium botulinum (strain Eklund 17B / Type B)).